The chain runs to 184 residues: ATP synthase subunit b, chloroplastic (184 aa).

A helical transmembrane segment spans residues 27 to 49 (LATNLINLSVVLGVLIFFGKGVL).

Belongs to the ATPase B chain family. F-type ATPases have 2 components, F(1) - the catalytic core - and F(0) - the membrane proton channel. F(1) has five subunits: alpha(3), beta(3), gamma(1), delta(1), epsilon(1). F(0) has four main subunits: a(1), b(1), b'(1) and c(10-14). The alpha and beta chains form an alternating ring which encloses part of the gamma chain. F(1) is attached to F(0) by a central stalk formed by the gamma and epsilon chains, while a peripheral stalk is formed by the delta, b and b' chains.

The protein localises to the plastid. It is found in the chloroplast thylakoid membrane. Functionally, f(1)F(0) ATP synthase produces ATP from ADP in the presence of a proton or sodium gradient. F-type ATPases consist of two structural domains, F(1) containing the extramembraneous catalytic core and F(0) containing the membrane proton channel, linked together by a central stalk and a peripheral stalk. During catalysis, ATP synthesis in the catalytic domain of F(1) is coupled via a rotary mechanism of the central stalk subunits to proton translocation. Its function is as follows. Component of the F(0) channel, it forms part of the peripheral stalk, linking F(1) to F(0). This is ATP synthase subunit b, chloroplastic from Manihot esculenta (Cassava).